The chain runs to 347 residues: N-acetyl-gamma-glutamyl-phosphate reductase (347 aa).

The active site involves cysteine 151.

The protein belongs to the NAGSA dehydrogenase family. Type 1 subfamily.

The protein resides in the cytoplasm. The enzyme catalyses N-acetyl-L-glutamate 5-semialdehyde + phosphate + NADP(+) = N-acetyl-L-glutamyl 5-phosphate + NADPH + H(+). It participates in amino-acid biosynthesis; L-arginine biosynthesis; N(2)-acetyl-L-ornithine from L-glutamate: step 3/4. Catalyzes the NADPH-dependent reduction of N-acetyl-5-glutamyl phosphate to yield N-acetyl-L-glutamate 5-semialdehyde. The chain is N-acetyl-gamma-glutamyl-phosphate reductase from Corynebacterium diphtheriae (strain ATCC 700971 / NCTC 13129 / Biotype gravis).